The sequence spans 101 residues: Small ribosomal subunit protein uS14A (101 aa).

The protein belongs to the universal ribosomal protein uS14 family. As to quaternary structure, part of the 30S ribosomal subunit. Contacts proteins S3 and S10.

Its function is as follows. Binds 16S rRNA, required for the assembly of 30S particles and may also be responsible for determining the conformation of the 16S rRNA at the A site. This chain is Small ribosomal subunit protein uS14A, found in Salinispora arenicola (strain CNS-205).